A 47-amino-acid polypeptide reads, in one-letter code: Single-stranded DNA-binding protein (47 aa).

Homodimer in the absence of DNA, monomer when binding DNA.

Functionally, binds preferentially to single-stranded DNA and therefore, destabilizes double-stranded DNA. It is involved in DNA replication, repair and recombination. Binds ss-DNA as the replication fork advances and stimulates the replisome processivity and accuracy. In Escherichia coli (Bacteriophage RB6), this protein is Single-stranded DNA-binding protein (32).